A 459-amino-acid chain; its full sequence is Bifunctional protein GlmU (459 aa).

The tract at residues 1 to 229 (MTNYAIILAA…FDESLGVNDR (229 aa)) is pyrophosphorylase. Residues 8-11 (LAAG), lysine 22, glutamine 72, and 77-78 (GT) each bind UDP-N-acetyl-alpha-D-glucosamine. Mg(2+) is bound at residue aspartate 102. Residues glycine 139, glutamate 154, asparagine 169, and asparagine 227 each contribute to the UDP-N-acetyl-alpha-D-glucosamine site. Asparagine 227 is a Mg(2+) binding site. The segment at 230–250 (VALAKAEKVMRRRINHAHMVN) is linker. An N-acetyltransferase region spans residues 251-459 (GVTLTNPAST…KKKPHHPNNK (209 aa)). Residues arginine 332 and lysine 350 each contribute to the UDP-N-acetyl-alpha-D-glucosamine site. The active-site Proton acceptor is histidine 362. Positions 365 and 376 each coordinate UDP-N-acetyl-alpha-D-glucosamine. Residues alanine 379, 385–386 (NY), serine 404, alanine 422, and arginine 439 contribute to the acetyl-CoA site.

The protein in the N-terminal section; belongs to the N-acetylglucosamine-1-phosphate uridyltransferase family. It in the C-terminal section; belongs to the transferase hexapeptide repeat family. In terms of assembly, homotrimer. Mg(2+) serves as cofactor.

It is found in the cytoplasm. It carries out the reaction alpha-D-glucosamine 1-phosphate + acetyl-CoA = N-acetyl-alpha-D-glucosamine 1-phosphate + CoA + H(+). The catalysed reaction is N-acetyl-alpha-D-glucosamine 1-phosphate + UTP + H(+) = UDP-N-acetyl-alpha-D-glucosamine + diphosphate. It participates in nucleotide-sugar biosynthesis; UDP-N-acetyl-alpha-D-glucosamine biosynthesis; N-acetyl-alpha-D-glucosamine 1-phosphate from alpha-D-glucosamine 6-phosphate (route II): step 2/2. Its pathway is nucleotide-sugar biosynthesis; UDP-N-acetyl-alpha-D-glucosamine biosynthesis; UDP-N-acetyl-alpha-D-glucosamine from N-acetyl-alpha-D-glucosamine 1-phosphate: step 1/1. The protein operates within bacterial outer membrane biogenesis; LPS lipid A biosynthesis. Catalyzes the last two sequential reactions in the de novo biosynthetic pathway for UDP-N-acetylglucosamine (UDP-GlcNAc). The C-terminal domain catalyzes the transfer of acetyl group from acetyl coenzyme A to glucosamine-1-phosphate (GlcN-1-P) to produce N-acetylglucosamine-1-phosphate (GlcNAc-1-P), which is converted into UDP-GlcNAc by the transfer of uridine 5-monophosphate (from uridine 5-triphosphate), a reaction catalyzed by the N-terminal domain. This chain is Bifunctional protein GlmU, found in Streptococcus mutans serotype c (strain ATCC 700610 / UA159).